A 405-amino-acid chain; its full sequence is Probable tRNA sulfurtransferase (405 aa).

The THUMP domain occupies 60-165; that stretch reads DQVMARLSQV…REAIYLSTKT (106 aa). ATP is bound by residues 183-184, 208-209, arginine 265, glycine 287, and glutamine 296; these read ML and HF.

The protein belongs to the ThiI family.

The protein resides in the cytoplasm. The catalysed reaction is [ThiI sulfur-carrier protein]-S-sulfanyl-L-cysteine + a uridine in tRNA + 2 reduced [2Fe-2S]-[ferredoxin] + ATP + H(+) = [ThiI sulfur-carrier protein]-L-cysteine + a 4-thiouridine in tRNA + 2 oxidized [2Fe-2S]-[ferredoxin] + AMP + diphosphate. It catalyses the reaction [ThiS sulfur-carrier protein]-C-terminal Gly-Gly-AMP + S-sulfanyl-L-cysteinyl-[cysteine desulfurase] + AH2 = [ThiS sulfur-carrier protein]-C-terminal-Gly-aminoethanethioate + L-cysteinyl-[cysteine desulfurase] + A + AMP + 2 H(+). It functions in the pathway cofactor biosynthesis; thiamine diphosphate biosynthesis. Its function is as follows. Catalyzes the ATP-dependent transfer of a sulfur to tRNA to produce 4-thiouridine in position 8 of tRNAs, which functions as a near-UV photosensor. Also catalyzes the transfer of sulfur to the sulfur carrier protein ThiS, forming ThiS-thiocarboxylate. This is a step in the synthesis of thiazole, in the thiamine biosynthesis pathway. The sulfur is donated as persulfide by IscS. In Lacticaseibacillus casei (strain BL23) (Lactobacillus casei), this protein is Probable tRNA sulfurtransferase.